A 161-amino-acid chain; its full sequence is MDMFEINITSVIQLMSFFLLLYILKKFLYDKYFEVMDARKEKIEGEIKKAEQLRKEAEELKKEAKGELIKIRESADSIIKKAKEEAEEIVNNAKKKAEAEAEKILVSAKEEIKNEREAMIKEVEQRVGEIAVVLAMKILKGTLDEKAKREYLMKILKEHEK.

Residues 10 to 29 (SVIQLMSFFLLLYILKKFLY) traverse the membrane as a helical segment.

This sequence belongs to the ATPase B chain family. In terms of assembly, F-type ATPases have 2 components, F(1) - the catalytic core - and F(0) - the membrane proton channel. F(1) has five subunits: alpha(3), beta(3), gamma(1), delta(1), epsilon(1). F(0) has three main subunits: a(1), b(2) and c(10-14). The alpha and beta chains form an alternating ring which encloses part of the gamma chain. F(1) is attached to F(0) by a central stalk formed by the gamma and epsilon chains, while a peripheral stalk is formed by the delta and b chains.

It is found in the cell inner membrane. Functionally, f(1)F(0) ATP synthase produces ATP from ADP in the presence of a proton or sodium gradient. F-type ATPases consist of two structural domains, F(1) containing the extramembraneous catalytic core and F(0) containing the membrane proton channel, linked together by a central stalk and a peripheral stalk. During catalysis, ATP synthesis in the catalytic domain of F(1) is coupled via a rotary mechanism of the central stalk subunits to proton translocation. Its function is as follows. Component of the F(0) channel, it forms part of the peripheral stalk, linking F(1) to F(0). The sequence is that of ATP synthase subunit b from Thermosipho melanesiensis (strain DSM 12029 / CIP 104789 / BI429).